The following is a 191-amino-acid chain: Thymidylate kinase (191 aa).

Residue 7-14 (GVDGVGKS) coordinates ATP.

Belongs to the thymidylate kinase family.

The catalysed reaction is dTMP + ATP = dTDP + ADP. In terms of biological role, phosphorylation of dTMP to form dTDP in both de novo and salvage pathways of dTTP synthesis. The polypeptide is Thymidylate kinase (Helicobacter pylori (strain HPAG1)).